Here is a 250-residue protein sequence, read N- to C-terminus: Proteasome subunit alpha (250 aa).

This sequence belongs to the peptidase T1A family. As to quaternary structure, the 20S proteasome core is composed of 14 alpha and 14 beta subunits that assemble into four stacked heptameric rings, resulting in a barrel-shaped structure. The two inner rings, each composed of seven catalytic beta subunits, are sandwiched by two outer rings, each composed of seven alpha subunits. The catalytic chamber with the active sites is on the inside of the barrel. Has a gated structure, the ends of the cylinder being occluded by the N-termini of the alpha-subunits. Is capped at one or both ends by the proteasome regulatory ATPase, PAN.

It is found in the cytoplasm. With respect to regulation, the formation of the proteasomal ATPase PAN-20S proteasome complex, via the docking of the C-termini of PAN into the intersubunit pockets in the alpha-rings, triggers opening of the gate for substrate entry. Interconversion between the open-gate and close-gate conformations leads to a dynamic regulation of the 20S proteasome proteolysis activity. Component of the proteasome core, a large protease complex with broad specificity involved in protein degradation. This chain is Proteasome subunit alpha, found in Methanobrevibacter smithii (strain ATCC 35061 / DSM 861 / OCM 144 / PS).